The primary structure comprises 94 residues: Evasin P1172 (94 aa).

3 disulfides stabilise this stretch: cysteine 35-cysteine 54, cysteine 39-cysteine 56, and cysteine 50-cysteine 67. N-linked (GlcNAc...) asparagine glycosylation is found at asparagine 38, asparagine 44, asparagine 53, and asparagine 80.

It localises to the secreted. In terms of biological role, salivary chemokine-binding protein which binds to host chemokines CXCL1, CXCL2, CXCL5 and CXCL8. This Ixodes ricinus (Common tick) protein is Evasin P1172.